The primary structure comprises 231 residues: Putative carboxymethylenebutenolidase (231 aa).

Catalysis depends on residues Asp169 and His200.

It belongs to the dienelactone hydrolase family.

The enzyme catalyses 2-(5-oxo-2,5-dihydrofuran-2-ylidene)acetate + H2O = 4-oxohex-2-enedioate + H(+). This is Putative carboxymethylenebutenolidase from Azospirillum brasilense.